A 101-amino-acid polypeptide reads, in one-letter code: Small ribosomal subunit protein uS14 (101 aa).

The protein belongs to the universal ribosomal protein uS14 family. Part of the 30S ribosomal subunit. Contacts proteins S3 and S10.

In terms of biological role, binds 16S rRNA, required for the assembly of 30S particles and may also be responsible for determining the conformation of the 16S rRNA at the A site. The chain is Small ribosomal subunit protein uS14 from Opitutus terrae (strain DSM 11246 / JCM 15787 / PB90-1).